A 78-amino-acid polypeptide reads, in one-letter code: Conotoxin ArMKLT2-0313 (78 aa).

Positions 1-22 (MKLTCVLIIAVLCLTVCQLITA) are cleaved as a signal peptide. A propeptide spanning residues 23-47 (DYLRDKQKYRSVRLRDGMLNFKGSR) is cleaved from the precursor. Residue Gln48 is modified to Pyrrolidone carboxylic acid. Cystine bridges form between Cys49/Cys62, Cys56/Cys67, and Cys61/Cys75.

It belongs to the conotoxin O1 superfamily. Expressed by the venom duct.

The protein localises to the secreted. This Conus arenatus (Sand-dusted cone) protein is Conotoxin ArMKLT2-0313.